Reading from the N-terminus, the 423-residue chain is MGFLSPIYVLFFCFGVRVYCQYEAYRWDDDYDQEPNEDYDPEFQFHQNIEYGVPFYNNILGCAKECFCPTNFPTSMYCDNRKLKTIPIIPMHIQQLNLQFNDIEAVTANSFINATHLKEINLSHNKIKSQKIDYGVFAKLSNLQQLHLEHNNLEEFPFPLPKSLERLLLGYNEISILPTNAMDGLVNVTMLDLCYNHLSDSMLKEKTLSKMEKLMQLNLCNNRLESMPLGLPSSLMYLSLENNSISSIPDNYFDKLPKLHALRISHNKLEDIPYDIFNLSNLIELNVGHNKLKQAFYIPRNLEHLYLQNNEIESINVTMICPSPDPVHHHHLTYLRVDQNKLKEPISSYIFFCFPRIHSIYYGEQRSTNGETIQLKTQVFRSYQEEEEEDDHDSQDNTLEGQEVSDEHYNSHYYEMQEWQDTI.

A signal peptide spans 1–20; sequence MGFLSPIYVLFFCFGVRVYC. Sulfotyrosine occurs at positions 22, 25, 31, 39, 51, and 77. The LRRNT domain occupies 53–91; that stretch reads VPFYNNILGCAKECFCPTNFPTSMYCDNRKLKTIPIIPM. LRR repeat units lie at residues 92–113, 116–129, 142–164, 165–184, 187–207, 213–233, 234–255, 258–279, 281–294, 301–322, and 331–353; these read HIQQLNLQFNDIEAVTANSFIN, HLKEINLSHNKIKS, NLQQLHLEHNNLEEFPFPLPKSL, ERLLLGYNEISILPTNAMDG, NVTMLDLCYNHLSDSMLKEKT, KLMQLNLCNNRLESMPLGLPS, SLMYLSLENNSISSIPDNYFDK, KLHALRISHNKLEDIPYDIFNL, NLIELNVGHNKLKQ, NLEHLYLQNNEIESINVTMICP, and HLTYLRVDQNKLKEPISSYIFFC. 2 N-linked (GlcNAc...) asparagine glycosylation sites follow: asparagine 113 and asparagine 121. Residue asparagine 187 is glycosylated (N-linked (GlcNAc...) asparagine). Asparagine 242 and asparagine 278 each carry an N-linked (GlcNAc...) asparagine glycan. An N-linked (GlcNAc...) asparagine glycan is attached at asparagine 316. Cysteine 321 and cysteine 353 form a disulfide bridge. The disordered stretch occupies residues 381 to 406; that stretch reads RSYQEEEEEDDHDSQDNTLEGQEVSD. Sulfotyrosine is present on residues tyrosine 413 and tyrosine 414.

Belongs to the small leucine-rich proteoglycan (SLRP) family. SLRP class II subfamily. In terms of assembly, binds the alpha(V)beta(3)-integrin. Post-translationally, glycosylated; contains keratan sulfate. Bone specific.

The protein resides in the secreted. The protein localises to the extracellular space. It is found in the extracellular matrix. Its function is as follows. May be implicated in biomineralization processes. Has a function in binding of osteoblasts via the alpha(V)beta(3)-integrin. This is Osteomodulin (Omd) from Mus musculus (Mouse).